We begin with the raw amino-acid sequence, 189 residues long: Elongation factor P (189 aa).

N6-(3,6-diaminohexanoyl)-5-hydroxylysine is present on Lys34.

Belongs to the elongation factor P family. May be beta-lysylated on the epsilon-amino group of Lys-34 by the combined action of EpmA and EpmB, and then hydroxylated on the C5 position of the same residue by EpmC (if this protein is present). Lysylation is critical for the stimulatory effect of EF-P on peptide-bond formation. The lysylation moiety may extend toward the peptidyltransferase center and stabilize the terminal 3-CCA end of the tRNA. Hydroxylation of the C5 position on Lys-34 may allow additional potential stabilizing hydrogen-bond interactions with the P-tRNA.

It is found in the cytoplasm. The protein operates within protein biosynthesis; polypeptide chain elongation. In terms of biological role, involved in peptide bond synthesis. Alleviates ribosome stalling that occurs when 3 or more consecutive Pro residues or the sequence PPG is present in a protein, possibly by augmenting the peptidyl transferase activity of the ribosome. Modification of Lys-34 is required for alleviation. The protein is Elongation factor P of Buchnera aphidicola subsp. Acyrthosiphon pisum (strain APS) (Acyrthosiphon pisum symbiotic bacterium).